We begin with the raw amino-acid sequence, 354 residues long: MNGTEGPYFYIPMLNTTGVVRSPYEYPQYYLVNPAAYAVLGAYMFFLILVGFPINFLTLYVTIEHKKLRTPLNYILLNLAVADLFMVFGGFTTTIYTSMHGYFVLGRLGCNVEGFSATLGGEIALWSLVVLAIERWVVVCKPISNFRFGENHAIMGVAFTWFMAAACAVPPLFGWSRYIPEGMQCSCGIDYYTRAEGFNNESFVIYMFTCHFCIPLMVVFFCYGRLVCAVKEAAAAQQESETTQRAEREVTRMVIIMVVSFLVSWVPYASVAWYIFTHQGSEFGPLFMTIPAFFAKSSSIYNPMIYICMNKQFRHCMITTLCCGKNPFEEEEGASSTASKTEASSVSSSSVSPA.

Topologically, residues Met-1–Ala-36 are extracellular. Asn-2 and Asn-15 each carry an N-linked (GlcNAc...) asparagine glycan. Residues Tyr-37–Val-61 traverse the membrane as a helical segment. The Cytoplasmic segment spans residues Thr-62–Asn-73. The chain crosses the membrane as a helical span at residues Tyr-74–Tyr-96. Topologically, residues Thr-97–Cys-110 are extracellular. Cys-110 and Cys-187 are oxidised to a cystine. Residues Asn-111–Ile-133 traverse the membrane as a helical segment. Positions Glu-134–Trp-136 match the 'Ionic lock' involved in activated form stabilization motif. Residues Glu-134–His-152 lie on the Cytoplasmic side of the membrane. Residues Ala-153–Phe-173 traverse the membrane as a helical segment. Residues Gly-174–Ser-202 lie on the Extracellular side of the membrane. N-linked (GlcNAc...) asparagine glycosylation occurs at Asn-200. The chain crosses the membrane as a helical span at residues Phe-203–Gly-224. At Arg-225–Arg-252 the chain is on the cytoplasmic side. Residues Met-253–Tyr-274 traverse the membrane as a helical segment. Topologically, residues Ile-275–Leu-286 are extracellular. Residues Phe-287–Cys-308 traverse the membrane as a helical segment. An N6-(retinylidene)lysine modification is found at Lys-296. At Met-309–Ala-354 the chain is on the cytoplasmic side. S-palmitoyl cysteine attachment occurs at residues Cys-322 and Cys-323. A disordered region spans residues Glu-329 to Ala-354. Residues Ala-334 to Ala-354 show a composition bias toward low complexity.

Belongs to the G-protein coupled receptor 1 family. Opsin subfamily. In terms of processing, phosphorylated on some or all of the serine and threonine residues present in the C-terminal region. Contains one covalently linked retinal chromophore.

Its subcellular location is the membrane. It localises to the cell projection. It is found in the cilium. The protein resides in the photoreceptor outer segment. In terms of biological role, photoreceptor required for image-forming vision at low light intensity. While most salt water fish species use retinal as chromophore, most freshwater fish use 3-dehydroretinal, or a mixture of retinal and 3-dehydroretinal. Light-induced isomerization of 11-cis to all-trans retinal triggers a conformational change that activates signaling via G-proteins. Subsequent receptor phosphorylation mediates displacement of the bound G-protein alpha subunit by arrestin and terminates signaling. The protein is Rhodopsin (rho) of Atherina boyeri (Big-scale sand smelt).